The chain runs to 128 residues: Large ribosomal subunit protein eL22 (128 aa).

This sequence belongs to the eukaryotic ribosomal protein eL22 family. Component of the large ribosomal subunit.

The protein resides in the cytoplasm. Functionally, component of the large ribosomal subunit. The ribosome is a large ribonucleoprotein complex responsible for the synthesis of proteins in the cell. In Gallus gallus (Chicken), this protein is Large ribosomal subunit protein eL22 (RPL22).